A 1054-amino-acid chain; its full sequence is Acid trehalase (1054 aa).

The N-terminal stretch at 1 to 21 (MRFKSVFTLLPLLAQLPSGGA) is a signal peptide. N-linked (GlcNAc...) asparagine glycosylation is found at N47, N135, N176, N283, and N307. Position 448-449 (448-449 (WD)) interacts with substrate. N-linked (GlcNAc...) asparagine glycans are attached at residues N493, N513, N570, and N578. Residue E584 is the Proton donor of the active site. Residues N618 and N644 are each glycosylated (N-linked (GlcNAc...) asparagine). 650-651 (KQ) lines the substrate pocket. 9 N-linked (GlcNAc...) asparagine glycosylation sites follow: N665, N734, N803, N826, N838, N903, N937, N966, and N992.

This sequence belongs to the glycosyl hydrolase 65 family.

The enzyme catalyses alpha,alpha-trehalose + H2O = alpha-D-glucose + beta-D-glucose. The chain is Acid trehalase (treA) from Emericella nidulans (strain FGSC A4 / ATCC 38163 / CBS 112.46 / NRRL 194 / M139) (Aspergillus nidulans).